The following is a 174-amino-acid chain: Bifunctional protein PyrR (174 aa).

The PRPP-binding signature appears at 97 to 109; sequence VVIVDDVLYTGRT.

This sequence belongs to the purine/pyrimidine phosphoribosyltransferase family. PyrR subfamily. Homodimer and homohexamer; in equilibrium.

It catalyses the reaction UMP + diphosphate = 5-phospho-alpha-D-ribose 1-diphosphate + uracil. Regulates transcriptional attenuation of the pyrimidine nucleotide (pyr) operon by binding in a uridine-dependent manner to specific sites on pyr mRNA. This disrupts an antiterminator hairpin in the RNA and favors formation of a downstream transcription terminator, leading to a reduced expression of downstream genes. Functionally, also displays a weak uracil phosphoribosyltransferase activity which is not physiologically significant. The protein is Bifunctional protein PyrR of Macrococcus caseolyticus (strain JCSC5402) (Macrococcoides caseolyticum).